The sequence spans 611 residues: Chaperone protein DnaK (611 aa).

Position 172 is a phosphothreonine; by autocatalysis (Thr172). The interval 575–611 is disordered; the sequence is AAQAAQAQQDGGNESADKQDDNVVDADYEEVNDDDKK. The segment covering 596 to 611 has biased composition (acidic residues); that stretch reads NVVDADYEEVNDDDKK.

This sequence belongs to the heat shock protein 70 family.

Its function is as follows. Acts as a chaperone. The protein is Chaperone protein DnaK of Shouchella clausii (strain KSM-K16) (Alkalihalobacillus clausii).